An 891-amino-acid chain; its full sequence is DNA mismatch repair protein MutS (891 aa).

Residue 643 to 650 participates in ATP binding; that stretch reads GPNMGGKS.

This sequence belongs to the DNA mismatch repair MutS family.

Its function is as follows. This protein is involved in the repair of mismatches in DNA. It is possible that it carries out the mismatch recognition step. This protein has a weak ATPase activity. This chain is DNA mismatch repair protein MutS, found in Xanthomonas campestris pv. campestris (strain ATCC 33913 / DSM 3586 / NCPPB 528 / LMG 568 / P 25).